The following is a 401-amino-acid chain: Imidazolonepropionase (401 aa).

Fe(3+)-binding residues include histidine 66 and histidine 68. Positions 66 and 68 each coordinate Zn(2+). 3 residues coordinate 4-imidazolone-5-propanoate: arginine 75, tyrosine 138, and histidine 171. Position 138 (tyrosine 138) interacts with N-formimidoyl-L-glutamate. Residue histidine 236 coordinates Fe(3+). Histidine 236 contributes to the Zn(2+) binding site. A 4-imidazolone-5-propanoate-binding site is contributed by glutamine 239. Aspartate 311 is a binding site for Fe(3+). Residue aspartate 311 participates in Zn(2+) binding. N-formimidoyl-L-glutamate is bound by residues asparagine 313 and glycine 315. Residue threonine 316 participates in 4-imidazolone-5-propanoate binding.

It belongs to the metallo-dependent hydrolases superfamily. HutI family. Zn(2+) serves as cofactor. Fe(3+) is required as a cofactor.

The protein localises to the cytoplasm. It carries out the reaction 4-imidazolone-5-propanoate + H2O = N-formimidoyl-L-glutamate. Its pathway is amino-acid degradation; L-histidine degradation into L-glutamate; N-formimidoyl-L-glutamate from L-histidine: step 3/3. In terms of biological role, catalyzes the hydrolytic cleavage of the carbon-nitrogen bond in imidazolone-5-propanoate to yield N-formimidoyl-L-glutamate. It is the third step in the universal histidine degradation pathway. The protein is Imidazolonepropionase of Acinetobacter baumannii (strain AB307-0294).